The sequence spans 363 residues: Protein disulfide-isomerase 1 (363 aa).

The N-terminal stretch at 1–20 (MKILLFVTLIALAFVALCSA) is a signal peptide. Thioredoxin domains follow at residues 21–132 (EGNV…NHAK) and 133–285 (TNVK…AAAE). Catalysis depends on nucleophile residues cysteine 51, cysteine 54, cysteine 172, and cysteine 175. Disulfide bonds link cysteine 51/cysteine 54 and cysteine 172/cysteine 175.

It belongs to the protein disulfide isomerase family.

Its subcellular location is the endoplasmic reticulum lumen. The catalysed reaction is Catalyzes the rearrangement of -S-S- bonds in proteins.. In terms of biological role, participates in the folding of proteins containing disulfide bonds, may be involved in glycosylation, prolyl hydroxylation and triglyceride transfer. This Dictyostelium discoideum (Social amoeba) protein is Protein disulfide-isomerase 1 (pdi1).